Here is a 550-residue protein sequence, read N- to C-terminus: Zinc finger protein 382 (550 aa).

A mediates interaction with TRIM28 region spans residues 1–105 (MPLQGSVSFK…RHSRPLIFIN (105 aa)). 2 represses transcription regions span residues 5–46 (GSVS…FVSV) and 70–211 (IFPS…PEQP). The region spanning 7–78 (VSFKDVTVDF…RIFPSYSYLE (72 aa)) is the KRAB domain. The C2H2-type 1; degenerate zinc finger occupies 212–234 (FDHNECEKSFLMKGMLFTHTRAH). 9 consecutive C2H2-type zinc fingers follow at residues 296 to 318 (FHCPYCGNNFRRKSYLIEHQRIH), 324 to 346 (YVCNQCGKAFRQKTALTLHEKTH), 352 to 374 (FICIDCGKSFRQKATLTRHHKTH), 380 to 402 (YECPQCGSAFRKKSYLIDHQRTH), 408 to 430 (YQCNECGKAFIQKTTLTVHQRTH), 436 to 458 (YICNECGKSFCQKTTLTLHQRIH), 464 to 486 (YICNECGKSFRQKAILTVHHRIH), 492 to 514 (NGCPQCGKAFSRKSNLIRHQKTH), and 520 to 542 (YECKQCGKFFSCKSNLIVHQKTH). The interval 296–550 (FHCPYCGNNF…THKVETTGIQ (255 aa)) is required for transcriptional repression activity; probably mediates sequence-specific DNA-binding.

This sequence belongs to the krueppel C2H2-type zinc-finger protein family. Interacts with TRIM28; enhances the transcriptional repressor activity. As to expression, specifically expressed in heart with a weaker expression also detected in skeletal muscle.

It localises to the nucleus. Functions as a sequence-specific transcriptional repressor. The polypeptide is Zinc finger protein 382 (ZNF382) (Homo sapiens (Human)).